The primary structure comprises 281 residues: sn-glycerol-3-phosphate transport system permease protein UgpE (281 aa).

The next 6 membrane-spanning stretches (helical) occupy residues 16 to 36 (LILG…AATL), 85 to 105 (FSIT…IVWF), 113 to 133 (FFWM…FPTV), 142 to 162 (LDSY…TFLF), 202 to 222 (ALFV…LLII), and 247 to 267 (WNSV…IVLV). In terms of domain architecture, ABC transmembrane type-1 spans 77-268 (LLNSFVMAFS…IPPVVIVLVM (192 aa)).

Belongs to the binding-protein-dependent transport system permease family. UgpAE subfamily. The complex is composed of two ATP-binding proteins (UgpC), two transmembrane proteins (UgpA and UgpE) and a solute-binding protein (UgpB).

Its subcellular location is the cell inner membrane. Its function is as follows. Part of the ABC transporter complex UgpBAEC involved in sn-glycerol-3-phosphate (G3P) import. Probably responsible for the translocation of the substrate across the membrane. This chain is sn-glycerol-3-phosphate transport system permease protein UgpE (ugpE), found in Escherichia coli O6:K15:H31 (strain 536 / UPEC).